Reading from the N-terminus, the 254-residue chain is Ditrans,polycis-undecaprenyl-diphosphate synthase ((2E,6E)-farnesyl-diphosphate specific) (254 aa).

Asp-25 is a catalytic residue. Asp-25 serves as a coordination point for Mg(2+). Substrate contacts are provided by residues 26–29 (GNGR), Trp-30, Arg-38, His-42, and 70–72 (SSE). Catalysis depends on Asn-73, which acts as the Proton acceptor. Trp-74, Arg-76, and Arg-193 together coordinate substrate. Residue His-198 participates in Mg(2+) binding. 199-201 (RIS) contacts substrate. Position 212 (Glu-212) interacts with Mg(2+).

This sequence belongs to the UPP synthase family. As to quaternary structure, homodimer. The cofactor is Mg(2+).

It carries out the reaction 8 isopentenyl diphosphate + (2E,6E)-farnesyl diphosphate = di-trans,octa-cis-undecaprenyl diphosphate + 8 diphosphate. Its function is as follows. Catalyzes the sequential condensation of isopentenyl diphosphate (IPP) with (2E,6E)-farnesyl diphosphate (E,E-FPP) to yield (2Z,6Z,10Z,14Z,18Z,22Z,26Z,30Z,34E,38E)-undecaprenyl diphosphate (di-trans,octa-cis-UPP). UPP is the precursor of glycosyl carrier lipid in the biosynthesis of bacterial cell wall polysaccharide components such as peptidoglycan and lipopolysaccharide. This Photorhabdus laumondii subsp. laumondii (strain DSM 15139 / CIP 105565 / TT01) (Photorhabdus luminescens subsp. laumondii) protein is Ditrans,polycis-undecaprenyl-diphosphate synthase ((2E,6E)-farnesyl-diphosphate specific).